The primary structure comprises 285 residues: Protein HtrL (285 aa).

The sequence is that of Protein HtrL from Escherichia coli (strain K12).